Here is a 289-residue protein sequence, read N- to C-terminus: 33 kDa chaperonin (289 aa).

Disulfide bonds link cysteine 229/cysteine 231 and cysteine 262/cysteine 265.

The protein belongs to the HSP33 family. Post-translationally, under oxidizing conditions two disulfide bonds are formed involving the reactive cysteines. Under reducing conditions zinc is bound to the reactive cysteines and the protein is inactive.

It is found in the cytoplasm. Functionally, redox regulated molecular chaperone. Protects both thermally unfolding and oxidatively damaged proteins from irreversible aggregation. Plays an important role in the bacterial defense system toward oxidative stress. The chain is 33 kDa chaperonin from Pectobacterium carotovorum subsp. carotovorum (strain PC1).